Here is a 353-residue protein sequence, read N- to C-terminus: MPQKVRIALDAMGGDFGPSVVIPGAAISLGRHPDVEFLLYGDAKLIEKELAAHPALRKASRVVHTDVAVAMHDKPSVALRRGRYKSSMWQAIDAVKKTEADVTVSAGNTGALMAMARFCLRTLPGIDRPAIAATWPTMRGDSVVLDLGASIGGDAQHLKALAIMGAAMASVLFDLERPTVGLLNIGVEEIKGGEEIREAAELLRAMNSQRFDFIGFVEGDGIGKGAADVIVSEGFAGNIALKAAEGTARQLAEYLRAAMSRTWRSKIGYLFARDAFKALKDKMDPNKSNGGVFLGLNGIVVKSHGGTNAEGFAYAVDVGYDMVRYDLLTKINQTLNRDAGALVATPSAQEVVS.

Belongs to the PlsX family. In terms of assembly, homodimer. Probably interacts with PlsY.

Its subcellular location is the cytoplasm. It catalyses the reaction a fatty acyl-[ACP] + phosphate = an acyl phosphate + holo-[ACP]. It participates in lipid metabolism; phospholipid metabolism. In terms of biological role, catalyzes the reversible formation of acyl-phosphate (acyl-PO(4)) from acyl-[acyl-carrier-protein] (acyl-ACP). This enzyme utilizes acyl-ACP as fatty acyl donor, but not acyl-CoA. The sequence is that of Phosphate acyltransferase from Rhodopseudomonas palustris (strain ATCC BAA-98 / CGA009).